We begin with the raw amino-acid sequence, 122 residues long: Holo-[acyl-carrier-protein] synthase (122 aa).

Residues aspartate 8 and glutamate 56 each contribute to the Mg(2+) site.

It belongs to the P-Pant transferase superfamily. AcpS family. Requires Mg(2+) as cofactor.

It localises to the cytoplasm. It carries out the reaction apo-[ACP] + CoA = holo-[ACP] + adenosine 3',5'-bisphosphate + H(+). In terms of biological role, transfers the 4'-phosphopantetheine moiety from coenzyme A to a Ser of acyl-carrier-protein. The protein is Holo-[acyl-carrier-protein] synthase of Salinispora arenicola (strain CNS-205).